We begin with the raw amino-acid sequence, 512 residues long: Cytochrome P450 72A13 (512 aa).

A helical transmembrane segment spans residues 2-22 (EISVASVTVSVAVVVVSWWVW). Cys-460 lines the heme pocket.

It belongs to the cytochrome P450 family. Heme is required as a cofactor.

Its subcellular location is the membrane. The protein is Cytochrome P450 72A13 (CYP72A13) of Arabidopsis thaliana (Mouse-ear cress).